We begin with the raw amino-acid sequence, 147 residues long: MVHLTGEEKAAVTGLWSKVNVDEVGGEALGRLLVVYPWTQRFFDSFGDLSTPDAVMNNPKVKAHGKKVLNSFSEGLKNLDNLKGTFVKLSELHCDKLHVDPENFKLLGNVLVCVLAHHFGKEFTPQVQAAYQKVVAGVANALAHKYH.

Positions 3-147 (HLTGEEKAAV…VANALAHKYH (145 aa)) constitute a Globin domain. Residues His-64 and His-93 each contribute to the heme b site.

Belongs to the globin family. As to quaternary structure, heterotetramer of two delta chains and two alpha chains. As to expression, red blood cells.

The protein is Hemoglobin subunit delta (HBD) of Ailuropoda melanoleuca (Giant panda).